The primary structure comprises 146 residues: Linear conopeptide (146 aa).

A signal peptide spans 1–19; that stretch reads MLRLIIAAAVLVSACLAYP. The propeptide occupies 20–34; it reads QRREGAPADAANLQS. M40 bears the Methionine sulfoxide; partial; in Cn2 mark. Propeptides lie at residues 58-80 and 104-146; these read FLPF…LEKR and FLHN…DKEQ. The segment at 107–146 is disordered; sequence NEKGDKHPFANVDSADTDLGQFEPSAENKNGEFRFFDKEQ. Residues 135–146 are compositionally biased toward basic and acidic residues; it reads KNGEFRFFDKEQ.

In terms of tissue distribution, expressed by the venom duct.

It is found in the secreted. This chain is Linear conopeptide, found in Conus consors (Singed cone).